Here is a 757-residue protein sequence, read N- to C-terminus: MTSGSVFFYILIFGKYFSHGGGQDVKCSLGYFPCGNITKCLPQLLHCNGVDDCGNQADEDNCGDNNGWSLQFDKYFASYYKMTSQYPFEAETPECLVGSVPVQCLCQGLELDCDETNLRAVPSVSSNVTAMSLQWNLIRKLPPDCFKNYHDLQKLYLQNNKITSISIYAFRGLNSLTKLYLSHNRITFLKPGVFEDLHRLEWLIIEDNHLSRISPPTFYGLNSLILLVLMNNVLTRLPDKPLCQHMPRLHWLDLEGNHIHNLRNLTFISCSNLTVLVMRKNKINHLNENTFAPLQKLDELDLGSNKIENLPPLIFKDLKELSQLNLSYNPIQKIQANQFDYLVKLKSLSLEGIEISNIQQRMFRPLMNLSHIYFKKFQYCGYAPHVRSCKPNTDGISSLENLLASIIQRVFVWVVSAVTCFGNIFVICMRPYIRSENKLYAMSIISLCCADCLMGIYLFVIGGFDLKFRGEYNKHAQLWMESTHCQLVGSLAILSTEVSVLLLTFLTLEKYICIVYPFRCVRPGKCRTITVLILIWITGFIVAFIPLSNKEFFKNYYGTNGVCFPLHSEDTESIGAQIYSVAIFLGINLAAFIIIVFSYGSMFYSVHQSAITATEIRNQVKKEMILAKRFFFIVFTDALCWIPIFVVKFLSLLQVEIPGTITSWVVIFILPINSALNPILYTLTTRPFKEMIHRFWYNYRQRKSMDSKGQKTYAPSFIWVEMWPLQEMPPELMKPDLFTYPCEMSLISQSTRLNSYS.

Topologically, residues 1-409 (MTSGSVFFYI…ENLLASIIQR (409 aa)) are extracellular. Residues 26 to 63 (KCSLGYFPCGNITKCLPQLLHCNGVDDCGNQADEDNCG) form the LDL-receptor class A domain. Intrachain disulfides connect Cys27-Cys40, Cys34-Cys53, and Cys47-Cys62. An N-linked (GlcNAc...) asparagine glycan is attached at Asn36. The Ca(2+) site is built by Leu45, Asn48, Val50, Asp52, Asp58, and Glu59. The LRRNT domain occupies 91 to 127 (ETPECLVGSVPVQCLCQGLELDCDETNLRAVPSVSSN). Asn127 carries an N-linked (GlcNAc...) asparagine glycan. LRR repeat units lie at residues 151-172 (DLQK…AFRG), 175-196 (SLTK…VFED), 199-220 (RLEW…TFYG), 223-244 (SLIL…PLCQ), 248-269 (RLHW…TFIS), 272-293 (NLTV…TFAP), 296-317 (KLDE…IFKD), 320-341 (ELSQ…QFDY), and 344-365 (KLKS…MFRP). 2 N-linked (GlcNAc...) asparagine glycosylation sites follow: Asn264 and Asn272. A glycan (N-linked (GlcNAc...) asparagine) is linked at Asn325. Asn368 is a glycosylation site (N-linked (GlcNAc...) asparagine). A helical membrane pass occupies residues 410–430 (VFVWVVSAVTCFGNIFVICMR). Topologically, residues 431-443 (PYIRSENKLYAMS) are cytoplasmic. The chain crosses the membrane as a helical span at residues 444–464 (IISLCCADCLMGIYLFVIGGF). The Extracellular portion of the chain corresponds to 465–486 (DLKFRGEYNKHAQLWMESTHCQ). Cys485 and Cys563 form a disulfide bridge. The chain crosses the membrane as a helical span at residues 487–507 (LVGSLAILSTEVSVLLLTFLT). Topologically, residues 508 to 527 (LEKYICIVYPFRCVRPGKCR) are cytoplasmic. A helical transmembrane segment spans residues 528-548 (TITVLILIWITGFIVAFIPLS). The Extracellular portion of the chain corresponds to 549–577 (NKEFFKNYYGTNGVCFPLHSEDTESIGAQ). The chain crosses the membrane as a helical span at residues 578 to 598 (IYSVAIFLGINLAAFIIIVFS). Topologically, residues 599–629 (YGSMFYSVHQSAITATEIRNQVKKEMILAKR) are cytoplasmic. The chain crosses the membrane as a helical span at residues 630–650 (FFFIVFTDALCWIPIFVVKFL). Ser651 is a topological domain (extracellular). Residues 652 to 672 (LLQVEIPGTITSWVVIFILPI) traverse the membrane as a helical segment. Topologically, residues 673-757 (NSALNPILYT…SQSTRLNSYS (85 aa)) are cytoplasmic.

The protein belongs to the G-protein coupled receptor 1 family. As to quaternary structure, interacts with C1QTNF8. As to expression, expressed in the brain, kidney, testis, placenta, uterus, ovary, adrenal, prostate, skin and heart. Not detected in spleen.

It localises to the cell membrane. Its function is as follows. Receptor for relaxins. The activity of this receptor is mediated by G proteins leading to stimulation of adenylate cyclase and an increase of cAMP. Binding of the ligand may also activate a tyrosine kinase pathway that inhibits the activity of a phosphodiesterase that degrades cAMP. The protein is Relaxin receptor 1 (RXFP1) of Homo sapiens (Human).